A 440-amino-acid polypeptide reads, in one-letter code: Chromosomal replication initiator protein DnaA (440 aa).

The segment at 1–74 (MNPSQILENL…VQSGNKAIIN (74 aa)) is domain I, interacts with DnaA modulators. The tract at residues 74–99 (NIQAQSTKQSNKSTKIDIAHIQAQST) is domain II. The interval 100–316 (ILNPSFTFES…GIIISLNAYA (217 aa)) is domain III, AAA+ region. Residues Gly-146, Gly-148, Lys-149, and Thr-150 each contribute to the ATP site. Positions 317-440 (TILGQEITLE…KNKILIKSQS (124 aa)) are domain IV, binds dsDNA.

Belongs to the DnaA family. Oligomerizes as a right-handed, spiral filament on DNA at oriC.

Its subcellular location is the cytoplasm. Plays an essential role in the initiation and regulation of chromosomal replication. ATP-DnaA binds to the origin of replication (oriC) to initiate formation of the DNA replication initiation complex once per cell cycle. Binds the DnaA box (a 9 base pair repeat at the origin) and separates the double-stranded (ds)DNA. Forms a right-handed helical filament on oriC DNA; dsDNA binds to the exterior of the filament while single-stranded (ss)DNA is stabiized in the filament's interior. The ATP-DnaA-oriC complex binds and stabilizes one strand of the AT-rich DNA unwinding element (DUE), permitting loading of DNA polymerase. After initiation quickly degrades to an ADP-DnaA complex that is not apt for DNA replication. Binds acidic phospholipids. This chain is Chromosomal replication initiator protein DnaA, found in Campylobacter jejuni subsp. doylei (strain ATCC BAA-1458 / RM4099 / 269.97).